The sequence spans 547 residues: Chaperonin GroEL 2 (547 aa).

ATP contacts are provided by residues 30 to 33 (TLGP), K51, 87 to 91 (DGTTT), G415, 479 to 481 (NAA), and D495. The segment at 528 to 547 (KPATAGLPHGGPGGFGGPEF) is disordered. Residues 535-547 (PHGGPGGFGGPEF) are compositionally biased toward gly residues.

Belongs to the chaperonin (HSP60) family. Forms a cylinder of 14 subunits composed of two heptameric rings stacked back-to-back. Interacts with the co-chaperonin GroES.

The protein localises to the cytoplasm. It catalyses the reaction ATP + H2O + a folded polypeptide = ADP + phosphate + an unfolded polypeptide.. Together with its co-chaperonin GroES, plays an essential role in assisting protein folding. The GroEL-GroES system forms a nano-cage that allows encapsulation of the non-native substrate proteins and provides a physical environment optimized to promote and accelerate protein folding. The sequence is that of Chaperonin GroEL 2 from Azoarcus sp. (strain BH72).